The primary structure comprises 266 residues: Pre-mRNA-splicing factor PRP11 (266 aa).

A disordered region spans residues 1 to 21 (MNYLEGVGSKKGGGGIASESQ). The segment at 66 to 96 (LVCKLCNTMHMSWSSVERHLGGKKHGLNVLR) adopts a Matrin-type zinc-finger fold.

Belongs to the SF3A2 family. Belongs to the CWC complex (or CEF1-associated complex), a spliceosome sub-complex reminiscent of a late-stage spliceosome composed of the U2, U5 and U6 snRNAs and at least BUD13, BUD31, BRR2, CDC40, CEF1, CLF1, CUS1, CWC2, CWC15, CWC21, CWC22, CWC23, CWC24, CWC25, CWC27, ECM2, HSH155, IST3, ISY1, LEA1, MSL1, NTC20, PRP8, PRP9, PRP11, PRP19, PRP21, PRP22, PRP45, PRP46, SLU7, SMB1, SMD1, SMD2, SMD3, SMX2, SMX3, SNT309, SNU114, SPP2, SYF1, SYF2, RSE1 and YJU2. Interacts with CUS2.

Its subcellular location is the nucleus. Its function is as follows. mRNA splicing factors, PRP9, PRP11, and PRP21, are necessary for addition of the U2 snRNP to the pre-mRNA in an early step of spliceosome assembly. The polypeptide is Pre-mRNA-splicing factor PRP11 (PRP11) (Saccharomyces cerevisiae (strain ATCC 204508 / S288c) (Baker's yeast)).